The primary structure comprises 188 residues: Adenine phosphoribosyltransferase (188 aa).

It belongs to the purine/pyrimidine phosphoribosyltransferase family. As to quaternary structure, homodimer.

It localises to the cytoplasm. It catalyses the reaction AMP + diphosphate = 5-phospho-alpha-D-ribose 1-diphosphate + adenine. Its pathway is purine metabolism; AMP biosynthesis via salvage pathway; AMP from adenine: step 1/1. In terms of biological role, catalyzes a salvage reaction resulting in the formation of AMP, that is energically less costly than de novo synthesis. The chain is Adenine phosphoribosyltransferase from Burkholderia thailandensis (strain ATCC 700388 / DSM 13276 / CCUG 48851 / CIP 106301 / E264).